We begin with the raw amino-acid sequence, 128 residues long: Small ribosomal subunit protein uS12 (128 aa).

Asp89 is modified (3-methylthioaspartic acid).

This sequence belongs to the universal ribosomal protein uS12 family. In terms of assembly, part of the 30S ribosomal subunit. Contacts proteins S8 and S17. May interact with IF1 in the 30S initiation complex.

With S4 and S5 plays an important role in translational accuracy. In terms of biological role, interacts with and stabilizes bases of the 16S rRNA that are involved in tRNA selection in the A site and with the mRNA backbone. Located at the interface of the 30S and 50S subunits, it traverses the body of the 30S subunit contacting proteins on the other side and probably holding the rRNA structure together. The combined cluster of proteins S8, S12 and S17 appears to hold together the shoulder and platform of the 30S subunit. This is Small ribosomal subunit protein uS12 from Campylobacter jejuni subsp. doylei (strain ATCC BAA-1458 / RM4099 / 269.97).